A 221-amino-acid chain; its full sequence is Interleukin-12 subunit alpha (221 aa).

Positions 1–25 are cleaved as a signal peptide; the sequence is MCPLRSLLLLSTLVLLHHLPHLSLG. Disulfide bonds link cysteine 39–cysteine 112, cysteine 66–cysteine 198, and cysteine 87–cysteine 125. Asparagine 41 and asparagine 95 each carry an N-linked (GlcNAc...) asparagine glycan.

The protein belongs to the IL-6 superfamily. Heterodimer with IL12B; disulfide-linked. This heterodimer is known as interleukin IL-12. Heterodimer with EBI3/IL27B; not disulfide-linked. This heterodimer is known as interleukin IL-35. Interacts with NBR1; this interaction promotes IL-12 secretion.

It is found in the secreted. In terms of biological role, heterodimerizes with IL12B to form the IL-12 cytokine or with EBI3/IL27B to form the IL-35 cytokine. IL-12 is primarily produced by professional antigen-presenting cells (APCs) such as B-cells and dendritic cells (DCs) as well as macrophages and granulocytes and regulates T-cell and natural killer-cell responses, induces the production of interferon-gamma (IFN-gamma), favors the differentiation of T-helper 1 (Th1) cells and is an important link between innate resistance and adaptive immunity. Mechanistically, exerts its biological effects through a receptor composed of IL12R1 and IL12R2 subunits. Binding to the receptor results in the rapid tyrosine phosphorylation of a number of cellular substrates including the JAK family kinases TYK2 and JAK2. In turn, recruited STAT4 gets phosphorylated and translocates to the nucleus where it regulates cytokine/growth factor responsive genes. As part of IL-35, plays essential roles in maintaining the immune homeostasis of the liver microenvironment and also functions as an immune-suppressive cytokine. Mediates biological events through unconventional receptors composed of IL12RB2 and gp130/IL6ST heterodimers or homodimers. Signaling requires the transcription factors STAT1 and STAT4, which form a unique heterodimer that binds to distinct DNA sites. In Cervus elaphus (Red deer), this protein is Interleukin-12 subunit alpha (IL12A).